Consider the following 326-residue polypeptide: Ig gamma-1 chain C region (326 aa).

Positions 1-97 (AETTAPSVYP…ASSTKVDKKI (97 aa)) are CH1. The cysteines at positions 27 and 82 are disulfide-linked. The tract at residues 98–112 (VPRNCGGDCKPCICT) is hinge. The tract at residues 113–219 (GSEVSSVFIF…PIEKTISKPE (107 aa)) is CH2. Disulfide bonds link Cys140–Cys200 and Cys246–Cys304. The N-linked (GlcNAc...) asparagine glycan is linked to Asn176. Residues 220–326 (GRTQVPHVYT…EKSLSHSPGK (107 aa)) are CH3.

This chain is Ig gamma-1 chain C region, found in Rattus norvegicus (Rat).